Consider the following 305-residue polypeptide: Protein FdhE homolog (305 aa).

The protein belongs to the FdhE family.

It localises to the cytoplasm. Functionally, necessary for formate dehydrogenase activity. This is Protein FdhE homolog from Actinobacillus pleuropneumoniae serotype 7 (strain AP76).